We begin with the raw amino-acid sequence, 476 residues long: MPSQILQISHHLPPKSSPSTEMMFKSLIYDDPSTTLLSRFGDDHHTISSTVKPLLSRSSSYNGTAMKTSSSSSAGGFTGWYQNRRRRSNSDNCLSAFSDDTNGTADGGNNSGDRQTTIGQEVGHAAAETFLLTRLCLKLLSYLGVGYRWITRFMALGCYAFLLMPGFIQVGYYYFFSPYVRRSIVYGDQPRNRLDLYLPKNSTGPKPVVAFVTGGAWIIGYKAWGSLLGQQLSERDIIVACIDYRNFPQGSISDMVKDASSGISFVCNHIAEYGGDPDRIYLMGQSAGAHIAACTIVEQVIKESGEGDSVSWSSSQINAYFGLSGGYNLLNLVDHFHSRGLYRSIFLSIMEGEESLRQFSPELVVQNPNLKHIIARLPPFILFHGTDDYSIPSDASKSFAETLQRLGAKAKVILYEGKTHTDLFLQDPMRGGIDEMFEDIVTVVLGDDQEAIGKSVDRRRLVPEFMLKLAHWVSPF.

The span at 92–104 (NCLSAFSDDTNGT) shows a compositional bias: polar residues. The segment at 92–116 (NCLSAFSDDTNGTADGGNNSGDRQT) is disordered. Helical transmembrane passes span 153–173 (FMAL…VGYY) and 208–228 (VVAF…GSLL). Substrate is bound by residues 214–216 (GGA) and 285–287 (QSA). Active-site residues include serine 286, aspartate 388, and histidine 420.

It belongs to the AB hydrolase superfamily. Isoprenylcysteine methylesterase family. As to expression, expressed in roots, rosette and cauline leaves, stems, flowers and siliques.

It localises to the endoplasmic reticulum membrane. Its subcellular location is the golgi apparatus membrane. The catalysed reaction is [protein]-C-terminal S-[(2E,6E)-farnesyl]-L-cysteine methyl ester + H2O = [protein]-C-terminal S-[(2E,6E)-farnesyl]-L-cysteine + methanol + H(+). Its function is as follows. Catalyzes the demethylation of isoprenylcysteine methylesters. May be involved in the regulation of ABA signaling. The protein is Probable isoprenylcysteine alpha-carbonyl methylesterase ICMEL1 of Arabidopsis thaliana (Mouse-ear cress).